A 373-amino-acid chain; its full sequence is SH3 domain-binding protein 5-like (373 aa).

Residues 1–36 are disordered; it reads MEGKEGPPCEVRLPTPGAEREGPVHPELGAFGESAS. 2 coiled-coil regions span residues 35–98 and 170–258; these read ASDA…ESAR and WQEM…KLRY. Disordered stretches follow at residues 274–308 and 332–373; these read ARRT…PADT and DLTD…SVSL. Over residues 332–360 the composition is skewed to basic and acidic residues; sequence DLTDVTSLDGRETGAVESGGSRERGEDRG.

It belongs to the SH3BP5 family.

In terms of biological role, functions as a guanine nucleotide exchange factor (GEF) for rab11a. This is SH3 domain-binding protein 5-like (sh3bp5l) from Xenopus laevis (African clawed frog).